The chain runs to 389 residues: Lipid-A-disaccharide synthase (389 aa).

It belongs to the LpxB family.

The enzyme catalyses a lipid X + a UDP-2-N,3-O-bis[(3R)-3-hydroxyacyl]-alpha-D-glucosamine = a lipid A disaccharide + UDP + H(+). Its pathway is bacterial outer membrane biogenesis; LPS lipid A biosynthesis. Condensation of UDP-2,3-diacylglucosamine and 2,3-diacylglucosamine-1-phosphate to form lipid A disaccharide, a precursor of lipid A, a phosphorylated glycolipid that anchors the lipopolysaccharide to the outer membrane of the cell. This chain is Lipid-A-disaccharide synthase, found in Histophilus somni (strain 2336) (Haemophilus somnus).